The primary structure comprises 340 residues: Beta-1,3-N-acetylglucosaminyltransferase radical fringe (340 aa).

At 1–4 the chain is on the cytoplasmic side; it reads MKIT. Residues 5–25 form a helical; Signal-anchor for type II membrane protein membrane-spanning segment; it reads YVGLIKVCFLVFLLLCATVLL. Over 26 to 340 the chain is Lumenal; that stretch reads NISWRQRDSS…AFSLAEDPTR (315 aa). Asn42 carries an N-linked (GlcNAc...) asparagine glycan. Substrate is bound at residue Arg110. Asn149 carries an N-linked (GlcNAc...) asparagine glycan. Cystine bridges form between Cys150-Cys161 and Cys179-Cys242. Asp183 is a binding site for substrate. A Mn(2+)-binding site is contributed by Asp184. Asp272 is a catalytic residue. Position 296 (His296) interacts with Mn(2+).

It belongs to the glycosyltransferase 31 family. Mn(2+) serves as cofactor.

Its subcellular location is the golgi apparatus membrane. It carries out the reaction 3-O-(alpha-L-fucosyl)-L-threonyl-[EGF-like domain protein] + UDP-N-acetyl-alpha-D-glucosamine = 3-O-(N-acetyl-beta-D-glucosaminyl-(1-&gt;3)-alpha-L-fucosyl)-L-threonyl-[EGF-like domain protein] + UDP + H(+). The catalysed reaction is 3-O-(alpha-L-fucosyl)-L-seryl-[EGF-like domain protein] + UDP-N-acetyl-alpha-D-glucosamine = 3-O-(N-acetyl-beta-D-glucosaminyl-(1-&gt;3)-alpha-L-fucosyl)-L-seryl-[EGF-like domain protein] + UDP + H(+). Its function is as follows. Glycosyltransferase that initiates the elongation of O-linked fucose residues attached to EGF-like repeats in the extracellular domain of Notch molecules. The chain is Beta-1,3-N-acetylglucosaminyltransferase radical fringe (rfng) from Xenopus laevis (African clawed frog).